Here is a 207-residue protein sequence, read N- to C-terminus: MAKTYDYLFKLLLIGDSGVGKTCALFRFSEDAFNATFISTIGIDFKIRTIELDGKRIKLQIWDTAGQERFRTITTAYYRGAMGIMLVYDITNEKSFENIRNWVRNIEEHASPDVEKMILGNKCDANDKRQVSREQGEKLAASFGIKFMETSAKANINIENAFFTLARDIKAKMDKKLEGNSPQGSNQGVKITPDQQKKSSFFRCVLL.

9 residues coordinate GTP: serine 17, glycine 18, valine 19, glycine 20, lysine 21, threonine 22, cysteine 23, serine 39, and threonine 40. Threonine 22 contacts Mg(2+). 2 short sequence motifs (switch) span residues 31–45 and 63–80; these read DAFN…GIDF and DTAG…YYRG. Mg(2+)-binding residues include threonine 40 and aspartate 63. Residues glycine 66, asparagine 121, lysine 122, aspartate 124, alanine 152, and lysine 153 each contribute to the GTP site. Cysteine 204 is modified (cysteine methyl ester). A lipid anchor (S-geranylgeranyl cysteine) is attached at cysteine 204. Residues 205-207 constitute a propeptide, removed in mature form; it reads VLL.

It belongs to the small GTPase superfamily. Rab family. Mg(2+) is required as a cofactor.

It localises to the cell membrane. The protein resides in the golgi apparatus. It is found in the endosome membrane. Its subcellular location is the recycling endosome membrane. The protein localises to the cell projection. It localises to the cilium. The protein resides in the cytoplasmic vesicle. It is found in the phagosome membrane. Its subcellular location is the cytoplasm. The protein localises to the cytoskeleton. It localises to the microtubule organizing center. The protein resides in the centrosome. It is found in the centriole. Its subcellular location is the cilium basal body. The protein localises to the midbody. The catalysed reaction is GTP + H2O = GDP + phosphate + H(+). Regulated by guanine nucleotide exchange factors (GEFs) which promote the exchange of bound GDP for free GTP, GTPase activating proteins (GAPs) which increase the GTP hydrolysis activity, and GDP dissociation inhibitors (GDIs) which inhibit the dissociation of the nucleotide from the GTPase. Activated in response to insulin. The small GTPases Rab are key regulators of intracellular membrane trafficking, from the formation of transport vesicles to their fusion with membranes. Rabs cycle between an inactive GDP-bound form and an active GTP-bound form that is able to recruit to membranes different sets of downstream effectors directly responsible for vesicle formation, movement, tethering and fusion. RAB8A is involved in polarized vesicular trafficking and neurotransmitter release. Together with RAB11A, RAB3IP, the exocyst complex, PARD3, PRKCI, ANXA2, CDC42 and DNMBP promotes transcytosis of PODXL to the apical membrane initiation sites (AMIS), apical surface formation and lumenogenesis. Regulates the compacted morphology of the Golgi. Together with MYO5B and RAB11A participates in epithelial cell polarization. Also involved in membrane trafficking to the cilium and ciliogenesis. Together with MICALL2, may also regulate adherens junction assembly. May play a role in insulin-induced transport to the plasma membrane of the glucose transporter GLUT4 and therefore play a role in glucose homeostasis. Involved in autophagy. Participates in the export of a subset of neosynthesized proteins through a Rab8-Rab10-Rab11-dependent endososomal export route. Targeted to and stabilized on stressed lysosomes through LRRK2 phosphorylation. Suppresses stress-induced lysosomal enlargement through EHBP1 and EHNP1L1 effector proteins. The polypeptide is Ras-related protein Rab-8A (RAB8A) (Gallus gallus (Chicken)).